We begin with the raw amino-acid sequence, 68 residues long: U-reduvitoxin-Pr3a (68 aa).

Residues 1 to 22 (MKAGMKLVLVLVIASIALLALA) form the signal peptide. Cystine bridges form between cysteine 29/cysteine 47, cysteine 36/cysteine 52, and cysteine 46/cysteine 59.

This sequence belongs to the venom Ptu1-like knottin family. Expressed by the venom gland.

It localises to the secreted. Functionally, binds reversibly and blocks P/Q-type voltage-gated calcium channels (Cav). This is U-reduvitoxin-Pr3a from Platymeris rhadamanthus (Red spot assassin bug).